The primary structure comprises 323 residues: Low affinity immunoglobulin gamma Fc region receptor II-c (323 aa).

Residues 1–42 form the signal peptide; it reads MGILSFLPVLATESDWADCKSPQPWGHMLLWTAVLFLAPVAG. Topologically, residues 43 to 223 are extracellular; it reads TPAAPPKAVL…VQAPSSSPMG (181 aa). Ig-like C2-type domains follow at residues 48–127 and 131–213; these read PKAV…VHLT and EWLV…VTIT. 2 disulfides stabilise this stretch: Cys71–Cys113 and Cys152–Cys196. N-linked (GlcNAc...) asparagine glycans are attached at residues Asn106, Asn180, and Asn187. The helical transmembrane segment at 224–246 threads the bilayer; sequence IIVAVVTGIAVAAIVAAVVALIY. The Cytoplasmic portion of the chain corresponds to 247–323; sequence CRKKRISANS…PPNDHVNSNN (77 aa). The segment at 277–323 is disordered; it reads KRQPEETNNDYETADGGYMTLNPRAPTDDDKNIYLTLPPNDHVNSNN. Phosphotyrosine; by SRC-type Tyr-kinases occurs at positions 294 and 310.

Post-translationally, phosphorylated by SRC-type Tyr-kinases such as LYN, BLK, FYN and SYK. As to expression, isoform IIC1 is detected in monocytes, macrophages, polymorphonuclear cells and natural killer cells.

It is found in the cytoplasm. The protein resides in the cell membrane. In terms of biological role, receptor for the Fc region of complexed immunoglobulins gamma. Low affinity receptor. Involved in a variety of effector and regulatory functions such as phagocytosis of immune complexes and modulation of antibody production by B-cells. The chain is Low affinity immunoglobulin gamma Fc region receptor II-c (FCGR2C) from Homo sapiens (Human).